The following is a 408-amino-acid chain: Putative odorant receptor 92a (408 aa).

The Cytoplasmic portion of the chain corresponds to 1–52 (MLFRKRKPKSDDEVITFDELTRFPMTFYKTIGEDLYSDRDPNVIRRYLLRFY). The chain crosses the membrane as a helical span at residues 53–73 (LVLGFLNFNAYVVGEIAYFIV). Position 74 (H74) is a topological domain, extracellular. A helical transmembrane segment spans residues 75 to 95 (IMSTTTLLEATAVAPCIGFSF). Residues 96–144 (MADFKQFGLTVNRKRLVRLLDDLKEIFPLDLEAQRKYNVSFYRKHMNRV) lie on the Cytoplasmic side of the membrane. A helical membrane pass occupies residues 145-165 (MTLFTILCMTYTSSFSFYPAI). The Extracellular portion of the chain corresponds to 166 to 209 (KSTIKYYLMGSEIFERNYGFHILFPYDAETDLTVYWFSYWGLAH). Residues 210–230 (CAYVAGVSYVCVDLLLIATIT) traverse the membrane as a helical segment. The Cytoplasmic portion of the chain corresponds to 231–276 (QLTMHFNFIANDLEAYEGGDHTDEENIKYLHNLVVYHARALDLSEE). A helical membrane pass occupies residues 277–301 (VNNIFSFLILWNFIAASLVICFAGF). Residues 302 to 310 (QITASNVED) are Extracellular-facing. The chain crosses the membrane as a helical span at residues 311–331 (IVLYFIFFSASLVQVFVVCYY). Residues 332-378 (GDEMISSSSRIGHSAFNQNWLPCSTKYKRILQFIIARSQKPASIRPP) are Cytoplasmic-facing. Residues 379–399 (TFPPISFNTFMKVISMSYQFF) traverse the membrane as a helical segment. The Extracellular segment spans residues 400 to 408 (ALLRTTYYG).

This sequence belongs to the insect chemoreceptor superfamily. Heteromeric odorant receptor channel (TC 1.A.69) family. Or49a subfamily. Interacts with Orco. Complexes exist early in the endomembrane system in olfactory sensory neurons (OSNs), coupling these complexes to the conserved ciliary trafficking pathway.

Its subcellular location is the cell membrane. Odorant receptor which mediates acceptance or avoidance behavior, depending on its substrates. The odorant receptor repertoire encodes a large collection of odor stimuli that vary widely in identity, intensity, and duration. May form a complex with Orco to form odorant-sensing units, providing sensitive and prolonged odorant signaling and calcium permeability. This is Putative odorant receptor 92a (Or92a) from Drosophila melanogaster (Fruit fly).